Here is a 532-residue protein sequence, read N- to C-terminus: MFTDLLHSSYFSLFLIVALGFMLGRIKIKGLSLDVSAVIFIALLFGHFGVIIPKELGNFGLVLFIFTIGIQAGPGFFDSFRSKGKTLIIITMLIISSACLTAVGLKYAFGIDTPSVVGLVAGALTSTPGLAVAIDSTNSPLASIAYGIAYPFGVIGVILFVKLLPKIMRIDLDKEARRLEIERRGQFPELGTCIYRITNPSVFGRSLMQINARAMTGAVISRLKHQEEISIPTAHTVLHEGDYIQAVGSEEALTQLAVLVGEREEGELPLENTQEIESLLLTKKDMINKQLGDLNLMKNFGCTVTRVRRSGIDLSPSPDLALKFGDKLMVVGEKEGIKGVARLLGNNAKKLSDTDFFPIAMGIVLGVLFGKLNISFPGGLSFSPGLTGGVLMVALLLSAIGKTGPILWSMSGPANQLLRQLGLLLFLAEVGTSAGKNLVATFQESGLLLFGVGAAITLVPMLIAAFVGRLVFKISLLDLLGTITGGMTSTPGLAAADSMVDSNIPSVAYATVYPIAMVFLILFIQVIATVVY.

6 helical membrane-spanning segments follow: residues 7 to 26 (HSSY…LGRI), 30 to 52 (GLSL…GVII), 59 to 77 (FGLV…PGFF), 87 to 109 (LIII…KYAF), 116 to 134 (VVGL…AVAI), and 139 to 161 (SPLA…ILFV). 2 consecutive RCK C-terminal domains span residues 179–262 (LEIE…LVGE) and 263–346 (REEG…LLGN). The next 4 membrane-spanning stretches (helical) occupy residues 356-378 (FFPI…SFPG), 388-410 (GGVL…LWSM), 446-468 (GLLL…AFVG), and 509-531 (YATV…ATVV).

It belongs to the AAE transporter (TC 2.A.81) family.

The protein localises to the cell membrane. This is an uncharacterized protein from Bacteroides fragilis (strain YCH46).